The chain runs to 142 residues: Nucleoside diphosphate kinase (142 aa).

Residues Lys-11, Phe-59, Arg-87, Thr-93, Arg-104, and Asn-114 each contribute to the ATP site. The Pros-phosphohistidine intermediate role is filled by His-117.

It belongs to the NDK family. Homotetramer. Requires Mg(2+) as cofactor.

It is found in the cytoplasm. It catalyses the reaction a 2'-deoxyribonucleoside 5'-diphosphate + ATP = a 2'-deoxyribonucleoside 5'-triphosphate + ADP. The catalysed reaction is a ribonucleoside 5'-diphosphate + ATP = a ribonucleoside 5'-triphosphate + ADP. Functionally, major role in the synthesis of nucleoside triphosphates other than ATP. The ATP gamma phosphate is transferred to the NDP beta phosphate via a ping-pong mechanism, using a phosphorylated active-site intermediate. The protein is Nucleoside diphosphate kinase of Thiobacillus denitrificans (strain ATCC 25259 / T1).